A 134-amino-acid polypeptide reads, in one-letter code: Probable glycine cleavage system H protein (134 aa).

Residues 29–110 (TVLVGITDYA…PYENWIAKLK (82 aa)) enclose the Lipoyl-binding domain. Lys70 is modified (N6-lipoyllysine).

It belongs to the GcvH family. In terms of assembly, the glycine cleavage system is composed of four proteins: P, T, L and H. It depends on (R)-lipoate as a cofactor.

In terms of biological role, the glycine cleavage system catalyzes the degradation of glycine. The H protein shuttles the methylamine group of glycine from the P protein to the T protein. The sequence is that of Probable glycine cleavage system H protein from Thermococcus gammatolerans (strain DSM 15229 / JCM 11827 / EJ3).